A 400-amino-acid polypeptide reads, in one-letter code: Aminomethyltransferase, mitochondrial (400 aa).

3 residues coordinate substrate: E221, R250, and Y397.

It belongs to the GcvT family. Component of the glycine decarboxylase complex (GDC), which is composed of four proteins: P, T, L and H.

It is found in the mitochondrion. The catalysed reaction is N(6)-[(R)-S(8)-aminomethyldihydrolipoyl]-L-lysyl-[protein] + (6S)-5,6,7,8-tetrahydrofolate = N(6)-[(R)-dihydrolipoyl]-L-lysyl-[protein] + (6R)-5,10-methylene-5,6,7,8-tetrahydrofolate + NH4(+). Its function is as follows. The glycine cleavage system (glycine decarboxylase complex) catalyzes the degradation of glycine. The polypeptide is Aminomethyltransferase, mitochondrial (GCV1) (Saccharomyces cerevisiae (strain ATCC 204508 / S288c) (Baker's yeast)).